We begin with the raw amino-acid sequence, 412 residues long: N-carbamoyl-L-amino-acid amidohydrolase (412 aa).

4 residues coordinate a divalent metal cation: histidine 82, aspartate 93, glutamate 128, and histidine 193. An N-carbamoyl-L-alpha-amino acid is bound by residues glutamine 196, histidine 229, asparagine 278, arginine 291, and glycine 360. The segment at 212–330 (SIVGVRALRV…DVDEFFNLSP (119 aa)) is involved in dimerization. Histidine 385 is a binding site for a divalent metal cation.

Belongs to the peptidase M20 family. As to quaternary structure, homodimer. It depends on Mn(2+) as a cofactor. Requires Ni(2+) as cofactor. Co(2+) serves as cofactor. The cofactor is Fe(2+).

It carries out the reaction an N-carbamoyl-L-alpha-amino acid + H2O + 2 H(+) = an L-alpha-amino acid + NH4(+) + CO2. The catalysed reaction is N-carbamoyl-L-tryptophan + H2O + 2 H(+) = L-tryptophan + NH4(+) + CO2. The enzyme catalyses N-carbamoyl-L-tyrosine + H2O + 2 H(+) = L-tyrosine + NH4(+) + CO2. It catalyses the reaction N-carbamoyl-L-phenylalanine + H2O + 2 H(+) = L-phenylalanine + NH4(+) + CO2. In terms of biological role, catalyzes the hydrolysis of aliphatic N-carbamoyl-L-alpha-amino acids to free L-alpha-amino acids. Is strictly L-specific since it is inactive toward N-carbamoyl-D-alpha-amino acids. Shows a preference for aromatic N-carbamoyl-L-alpha-amino acids, such as N-carbamoyl-L-tryptophan and N-carbamoyl-L-tyrosine and, to a lesser extent, N-carbamoyl-L-phenylalanine and the non-natural amino acid N-carbamoyl-L-thienylalanine. Carbamoyl derivatives of beta-alanine and charged aliphatic amino acids are not accepted as substrates. The polypeptide is N-carbamoyl-L-amino-acid amidohydrolase (Paenarthrobacter aurescens (Arthrobacter aurescens)).